The sequence spans 1036 residues: Protein translocase subunit SecA, chloroplastic (1036 aa).

The N-terminal 76 residues, Met1–Ala76, are a transit peptide targeting the chloroplast. Met186–Thr193 lines the ATP pocket. Residues Asn995 to Thr1036 are disordered. Positions Gln1000–Gly1015 are enriched in basic and acidic residues. Positions Asn1020–Thr1036 are enriched in polar residues.

The protein belongs to the SecA family.

It localises to the plastid. The protein localises to the chloroplast stroma. Its subcellular location is the chloroplast thylakoid membrane. It catalyses the reaction ATP + H2O + chloroplast-proteinSide 1 = ADP + phosphate + chloroplast-proteinSide 2.. In terms of biological role, has a central role in coupling the hydrolysis of ATP to the transfer of proteins across the thylakoid membrane. This is Protein translocase subunit SecA, chloroplastic from Spinacia oleracea (Spinach).